The following is a 154-amino-acid chain: Myoglobin (154 aa).

A Globin domain is found at glycine 2–lysine 148. Position 4 is a phosphoserine (serine 4). Histidine 65 lines the nitrite pocket. O2 is bound at residue histidine 65. Threonine 68 is modified (phosphothreonine). Histidine 94 is a heme b binding site.

In terms of assembly, monomer.

It localises to the cytoplasm. The protein resides in the sarcoplasm. The enzyme catalyses Fe(III)-heme b-[protein] + nitric oxide + H2O = Fe(II)-heme b-[protein] + nitrite + 2 H(+). It carries out the reaction H2O2 + AH2 = A + 2 H2O. In terms of biological role, monomeric heme protein which primary function is to store oxygen and facilitate its diffusion within muscle tissues. Reversibly binds oxygen through a pentacoordinated heme iron and enables its timely and efficient release as needed during periods of heightened demand. Depending on the oxidative conditions of tissues and cells, and in addition to its ability to bind oxygen, it also has a nitrite reductase activity whereby it regulates the production of bioactive nitric oxide. Under stress conditions, like hypoxia and anoxia, it also protects cells against reactive oxygen species thanks to its pseudoperoxidase activity. In Hystrix cristata (North African crested porcupine), this protein is Myoglobin.